A 427-amino-acid polypeptide reads, in one-letter code: 3-phosphoshikimate 1-carboxyvinyltransferase (427 aa).

Lysine 20, serine 21, and arginine 25 together coordinate 3-phosphoshikimate. Lysine 20 is a binding site for phosphoenolpyruvate. Positions 92 and 120 each coordinate phosphoenolpyruvate. 3-phosphoshikimate-binding residues include serine 166, glutamine 168, aspartate 312, and lysine 339. Position 168 (glutamine 168) interacts with phosphoenolpyruvate. The Proton acceptor role is filled by aspartate 312. Positions 343 and 385 each coordinate phosphoenolpyruvate.

The protein belongs to the EPSP synthase family. In terms of assembly, monomer.

The protein resides in the cytoplasm. It catalyses the reaction 3-phosphoshikimate + phosphoenolpyruvate = 5-O-(1-carboxyvinyl)-3-phosphoshikimate + phosphate. Its pathway is metabolic intermediate biosynthesis; chorismate biosynthesis; chorismate from D-erythrose 4-phosphate and phosphoenolpyruvate: step 6/7. In terms of biological role, catalyzes the transfer of the enolpyruvyl moiety of phosphoenolpyruvate (PEP) to the 5-hydroxyl of shikimate-3-phosphate (S3P) to produce enolpyruvyl shikimate-3-phosphate and inorganic phosphate. In Streptococcus pneumoniae (strain Hungary19A-6), this protein is 3-phosphoshikimate 1-carboxyvinyltransferase.